A 110-amino-acid chain; its full sequence is NADH-quinone oxidoreductase subunit K (110 aa).

A run of 3 helical transmembrane segments spans residues 13 to 33 (VTHG…GIII), 38 to 58 (ILIL…NFLI), and 70 to 90 (VFVF…LAIV).

Belongs to the complex I subunit 4L family. NDH-1 is composed of 14 different subunits. Subunits NuoA, H, J, K, L, M, N constitute the membrane sector of the complex.

The protein localises to the cell inner membrane. The catalysed reaction is a quinone + NADH + 5 H(+)(in) = a quinol + NAD(+) + 4 H(+)(out). Functionally, NDH-1 shuttles electrons from NADH, via FMN and iron-sulfur (Fe-S) centers, to quinones in the respiratory chain. The immediate electron acceptor for the enzyme in this species is believed to be ubiquinone. Couples the redox reaction to proton translocation (for every two electrons transferred, four hydrogen ions are translocated across the cytoplasmic membrane), and thus conserves the redox energy in a proton gradient. This chain is NADH-quinone oxidoreductase subunit K, found in Francisella tularensis subsp. tularensis (strain FSC 198).